A 172-amino-acid chain; its full sequence is Adenine phosphoribosyltransferase (172 aa).

The protein belongs to the purine/pyrimidine phosphoribosyltransferase family. Homodimer.

Its subcellular location is the cytoplasm. The enzyme catalyses AMP + diphosphate = 5-phospho-alpha-D-ribose 1-diphosphate + adenine. The protein operates within purine metabolism; AMP biosynthesis via salvage pathway; AMP from adenine: step 1/1. In terms of biological role, catalyzes a salvage reaction resulting in the formation of AMP, that is energically less costly than de novo synthesis. This is Adenine phosphoribosyltransferase from Methanococcus maripaludis (strain C5 / ATCC BAA-1333).